Here is a 375-residue protein sequence, read N- to C-terminus: Chaperone protein DnaJ (375 aa).

A J domain is found at 5–69; that stretch reads DYYEILGIDK…QKRAQYDQFG (65 aa). A CR-type zinc finger spans residues 131-213; the sequence is GKETDIEIPK…CGGSGTVQKN (83 aa). The Zn(2+) site is built by C144, C147, C161, C164, C187, C190, C201, and C204. 4 CXXCXGXG motif repeats span residues 144–151, 161–168, 187–194, and 201–208; these read CDTCNGSG, CSHCHGSG, CNYCQGTG, and CNTCGGSG.

The protein belongs to the DnaJ family. In terms of assembly, homodimer. Zn(2+) is required as a cofactor.

Its subcellular location is the cytoplasm. Functionally, participates actively in the response to hyperosmotic and heat shock by preventing the aggregation of stress-denatured proteins and by disaggregating proteins, also in an autonomous, DnaK-independent fashion. Unfolded proteins bind initially to DnaJ; upon interaction with the DnaJ-bound protein, DnaK hydrolyzes its bound ATP, resulting in the formation of a stable complex. GrpE releases ADP from DnaK; ATP binding to DnaK triggers the release of the substrate protein, thus completing the reaction cycle. Several rounds of ATP-dependent interactions between DnaJ, DnaK and GrpE are required for fully efficient folding. Also involved, together with DnaK and GrpE, in the DNA replication of plasmids through activation of initiation proteins. This is Chaperone protein DnaJ from Oceanobacillus iheyensis (strain DSM 14371 / CIP 107618 / JCM 11309 / KCTC 3954 / HTE831).